Reading from the N-terminus, the 33-residue chain is Cytochrome b6-f complex subunit 8 (33 aa).

Residues 2 to 22 traverse the membrane as a helical segment; the sequence is LFTIAWASLAAVFSFSIAMVV.

Belongs to the PetN family. As to quaternary structure, the 4 large subunits of the cytochrome b6-f complex are cytochrome b6, subunit IV (17 kDa polypeptide, PetD), cytochrome f and the Rieske protein, while the 4 small subunits are PetG, PetL, PetM and PetN. The complex functions as a dimer.

Its subcellular location is the cellular thylakoid membrane. Component of the cytochrome b6-f complex, which mediates electron transfer between photosystem II (PSII) and photosystem I (PSI), cyclic electron flow around PSI, and state transitions. This Synechococcus sp. (strain CC9311) protein is Cytochrome b6-f complex subunit 8.